The sequence spans 589 residues: Sentrin-specific protease 2 (589 aa).

The Nuclear localization signal signature appears at 28–31 (KRRR). At serine 32 the chain carries Phosphoserine. Positions 46 to 51 (PAKRPR) match the Nuclear localization signal motif. The tract at residues 155 to 176 (SEGCNRRPGGRRHSKGNPESSL) is disordered. The short motif at 317-332 (LEPDLSEEVSARLRLG) is the Nuclear export signal element. Serine 333 and serine 344 each carry phosphoserine. The protease stretch occupies residues 396 to 560 (RITRGDIQTL…FTCKYADYIS (165 aa)). Active-site residues include histidine 478 and aspartate 495. The active-site Nucleophile is cysteine 548.

The protein belongs to the peptidase C48 family. Binds to SUMO2 and SUMO3. Interacts with the C-terminal domain of NUP153 via its N-terminus. Interacts with MTA1. Post-translationally, polyubiquitinated; which leads to proteasomal degradation.

The protein resides in the nucleus. Its subcellular location is the nuclear pore complex. It localises to the nucleus membrane. The protein localises to the cytoplasm. Protease that catalyzes two essential functions in the SUMO pathway. The first is the hydrolysis of an alpha-linked peptide bond at the C-terminal end of the small ubiquitin-like modifier (SUMO) propeptides, SUMO1, SUMO2 and SUMO3 leading to the mature form of the proteins. The second is the deconjugation of SUMO1, SUMO2 and SUMO3 from targeted proteins, by cleaving an epsilon-linked peptide bond between the C-terminal glycine of the mature SUMO and the lysine epsilon-amino group of the target protein. May down-regulate CTNNB1 levels and thereby modulate the Wnt pathway. Deconjugates SUMO2 from MTA1. Plays a dynamic role in adipogenesis by desumoylating and promoting the stabilization of CEBPB. Acts as a regulator of the cGAS-STING pathway by catalyzing desumoylation of CGAS and STING1 during the late phase of viral infection. This Homo sapiens (Human) protein is Sentrin-specific protease 2.